Consider the following 162-residue polypeptide: Cytochrome c-type biogenesis protein CcmE (162 aa).

Residues 1–7 (MTRKQRR) are Cytoplasmic-facing. The helical; Signal-anchor for type II membrane protein transmembrane segment at 8 to 28 (LTMIGGSLVVLAIAAALVLNA) threads the bilayer. Topologically, residues 29–162 (LRDSIVFFST…EASGKQGVSQ (134 aa)) are periplasmic. 2 residues coordinate heme: His122 and Tyr126. The segment at 138–162 (QGHWKDDYGPQAGAVEASGKQGVSQ) is disordered.

Belongs to the CcmE/CycJ family.

The protein localises to the cell inner membrane. Its function is as follows. Heme chaperone required for the biogenesis of c-type cytochromes. Transiently binds heme delivered by CcmC and transfers the heme to apo-cytochromes in a process facilitated by CcmF and CcmH. The polypeptide is Cytochrome c-type biogenesis protein CcmE (Nitrobacter hamburgensis (strain DSM 10229 / NCIMB 13809 / X14)).